The following is a 714-amino-acid chain: Interferon-induced GTP-binding protein Mx2 (714 aa).

The segment at 1-89 is disordered; that stretch reads MSMSYRALKF…QRSKGSENNL (89 aa). Composition is skewed to polar residues over residues 61–70 and 79–88; these read NNFNQLNLDP and QQRSKGSENN. A Dynamin-type G domain is found at 115-386; the sequence is DLALPAIAVI…LIWHINKSLP (272 aa). Positions 125 to 132 are G1 motif; the sequence is GDQSSGKS. 125-132 is a GTP binding site; the sequence is GDQSSGKS. The interval 150 to 152 is G2 motif; that stretch reads ITR. The G3 motif stretch occupies residues 224–227; the sequence is DLPG. Residues 224 to 228 and 293 to 296 each bind GTP; these read DLPGI and TKPD. The tract at residues 293–296 is G4 motif; the sequence is TKPD. The tract at residues 325 to 328 is G5 motif; sequence KCRG. One can recognise a GED domain in the interval 622 to 713; sequence IVEIGVHLNA…ALYEFPHFKS (92 aa).

The protein belongs to the TRAFAC class dynamin-like GTPase superfamily. Dynamin/Fzo/YdjA family.

The protein resides in the cytoplasm. Its subcellular location is the nucleus. Functionally, interferon-induced dynamin-like GTPase with antiviral activity. In Ovis aries (Sheep), this protein is Interferon-induced GTP-binding protein Mx2 (MX2).